The sequence spans 93 residues: UPF0147 protein MM_1385 (93 aa).

The protein belongs to the UPF0147 family.

The polypeptide is UPF0147 protein MM_1385 (Methanosarcina mazei (strain ATCC BAA-159 / DSM 3647 / Goe1 / Go1 / JCM 11833 / OCM 88) (Methanosarcina frisia)).